A 71-amino-acid polypeptide reads, in one-letter code: Putative RNA-binding regulatory peptide (71 aa).

As to quaternary structure, interacts with IGF2BP1 (via KH3 and KH4 domains); the interaction results in increased binding of IGF2BP1 to N6-methyladenosine (m6A)-containing mRNAs. In terms of tissue distribution, detected in colon (at protein level).

Functionally, enhances binding of IGF2BP1 to N6-methyladenosine (m6A)-containing mRNAs, thereby contributing to increased mRNA stability. Also increases the interaction of IGF2BP1 with RNA stabilizers ELAVL1/HUR, MATR3 and PABPC1, and increases the interaction of RNA stabilizers ELAVL1/HUR, MATR3 and PABPC1 with m6A-containing mRNAs. Contributes to MYC stability by enhancing binding of IGF2BP1 to m6A-containing MYC mRNAs and increasing recruitment of RNA stabilizing proteins to m6A-containing MYC mRNAs. The protein is Putative RNA-binding regulatory peptide of Homo sapiens (Human).